A 147-amino-acid polypeptide reads, in one-letter code: UPF0306 protein YhbP (147 aa).

Belongs to the UPF0306 family.

The protein is UPF0306 protein YhbP of Salmonella choleraesuis (strain SC-B67).